Reading from the N-terminus, the 397-residue chain is CCA-adding enzyme (397 aa).

Residues glycine 26 and arginine 29 each coordinate ATP. The CTP site is built by glycine 26 and arginine 29. 2 residues coordinate Mg(2+): aspartate 39 and aspartate 41. ATP contacts are provided by arginine 110, aspartate 153, arginine 156, arginine 159, and arginine 162. CTP is bound by residues arginine 110, aspartate 153, arginine 156, arginine 159, and arginine 162.

Belongs to the tRNA nucleotidyltransferase/poly(A) polymerase family. Bacterial CCA-adding enzyme type 3 subfamily. As to quaternary structure, homodimer. It depends on Mg(2+) as a cofactor.

It carries out the reaction a tRNA precursor + 2 CTP + ATP = a tRNA with a 3' CCA end + 3 diphosphate. It catalyses the reaction a tRNA with a 3' CCA end + 2 CTP + ATP = a tRNA with a 3' CCACCA end + 3 diphosphate. In terms of biological role, catalyzes the addition and repair of the essential 3'-terminal CCA sequence in tRNAs without using a nucleic acid template. Adds these three nucleotides in the order of C, C, and A to the tRNA nucleotide-73, using CTP and ATP as substrates and producing inorganic pyrophosphate. tRNA 3'-terminal CCA addition is required both for tRNA processing and repair. Also involved in tRNA surveillance by mediating tandem CCA addition to generate a CCACCA at the 3' terminus of unstable tRNAs. While stable tRNAs receive only 3'-terminal CCA, unstable tRNAs are marked with CCACCA and rapidly degraded. This chain is CCA-adding enzyme, found in Bacillus cereus (strain AH187).